Here is an 883-residue protein sequence, read N- to C-terminus: Aldehyde-alcohol dehydrogenase (883 aa).

The aldehyde dehydrogenase stretch occupies residues 13 to 456; it reads KLVAEKHVDE…DNVSAINLLN (444 aa). Residues 121–126, Gly206, and Gly224 each bind NAD(+); that span reads ITPTTN. Catalysis depends on Cys257, which acts as the Nucleophile. Residues Glu355, Leu435, and 438–443 contribute to the NAD(+) site; that span reads GSYGRN. The tract at residues 457-464 is linker; it reads IKKVGRRR. NAD(+)-binding positions include Asp500, Asp534, 561–565, 612–613, Val625, Lys634, and Leu653; these read GSPMD and TT. Residues Asp668, His672, His736, and His750 each coordinate Fe cation.

It in the N-terminal section; belongs to the aldehyde dehydrogenase family. The protein in the C-terminal section; belongs to the iron-containing alcohol dehydrogenase family. Fe(2+) serves as cofactor.

It catalyses the reaction an aldehyde + NAD(+) + H2O = a carboxylate + NADH + 2 H(+). The enzyme catalyses ethanol + NAD(+) = acetaldehyde + NADH + H(+). Functionally, has alcohol dehydrogenase activity. Has aldehyde dehydrogenase activity. Plays a role in enhancing virulence in mice, under ethanol stress conditions, perhaps by inducing expression of pneumolysin (Ply) and increasing production of hydrogen peroxide H(2)O(2). May be considered a potential virulence factor. This is Aldehyde-alcohol dehydrogenase from Streptococcus pneumoniae serotype 2 (strain D39 / NCTC 7466).